Here is a 388-residue protein sequence, read N- to C-terminus: GTPase Obg (388 aa).

Residues 1–159 (MKFVDEANIR…RSIKLELLLL (159 aa)) form the Obg domain. An OBG-type G domain is found at 160-333 (ADVGLLGMPN…LSIKMLDYIR (174 aa)). GTP-binding positions include 166 to 173 (GMPNAGKS), 191 to 195 (FTTLV), 213 to 216 (DIPG), 283 to 286 (NKTD), and 314 to 316 (SAY). Ser173 and Thr193 together coordinate Mg(2+).

The protein belongs to the TRAFAC class OBG-HflX-like GTPase superfamily. OBG GTPase family. As to quaternary structure, monomer. Requires Mg(2+) as cofactor.

Its subcellular location is the cytoplasm. In terms of biological role, an essential GTPase which binds GTP, GDP and possibly (p)ppGpp with moderate affinity, with high nucleotide exchange rates and a fairly low GTP hydrolysis rate. Plays a role in control of the cell cycle, stress response, ribosome biogenesis and in those bacteria that undergo differentiation, in morphogenesis control. The protein is GTPase Obg of Shewanella frigidimarina (strain NCIMB 400).